Consider the following 432-residue polypeptide: Proline--tRNA ligase (432 aa).

Belongs to the class-II aminoacyl-tRNA synthetase family. ProS type 2 subfamily. As to quaternary structure, homodimer.

The protein resides in the cytoplasm. The enzyme catalyses tRNA(Pro) + L-proline + ATP = L-prolyl-tRNA(Pro) + AMP + diphosphate. Its function is as follows. Catalyzes the attachment of proline to tRNA(Pro) in a two-step reaction: proline is first activated by ATP to form Pro-AMP and then transferred to the acceptor end of tRNA(Pro). The chain is Proline--tRNA ligase from Rickettsia prowazekii (strain Madrid E).